The sequence spans 874 residues: Probable leucine--tRNA ligase, cytoplasmic (874 aa).

The 'HIGH' region signature appears at 36–46 (PYMNGRLHLGH). The 'KMSKS' region signature appears at 544 to 548 (KMSKS). Position 547 (K547) interacts with ATP.

It belongs to the class-I aminoacyl-tRNA synthetase family.

It localises to the cytoplasm. It catalyses the reaction tRNA(Leu) + L-leucine + ATP = L-leucyl-tRNA(Leu) + AMP + diphosphate. The sequence is that of Probable leucine--tRNA ligase, cytoplasmic from Encephalitozoon cuniculi (strain GB-M1) (Microsporidian parasite).